An 87-amino-acid polypeptide reads, in one-letter code: Large ribosomal subunit protein eL34 (87 aa).

This sequence belongs to the eukaryotic ribosomal protein eL34 family.

This is Large ribosomal subunit protein eL34 from Sulfurisphaera tokodaii (strain DSM 16993 / JCM 10545 / NBRC 100140 / 7) (Sulfolobus tokodaii).